The primary structure comprises 343 residues: Anthranilate phosphoribosyltransferase (343 aa).

5-phospho-alpha-D-ribose 1-diphosphate contacts are provided by residues glycine 84, 87 to 88, threonine 92, 94 to 97, 112 to 120, and serine 124; these read GD, NIST, and KHGNRGVSS. Glycine 84 contributes to the anthranilate binding site. Position 96 (serine 96) interacts with Mg(2+). Asparagine 115 contributes to the anthranilate binding site. Residue arginine 170 coordinates anthranilate. Residues aspartate 229 and glutamate 230 each coordinate Mg(2+).

The protein belongs to the anthranilate phosphoribosyltransferase family. As to quaternary structure, homodimer. The cofactor is Mg(2+).

It carries out the reaction N-(5-phospho-beta-D-ribosyl)anthranilate + diphosphate = 5-phospho-alpha-D-ribose 1-diphosphate + anthranilate. It functions in the pathway amino-acid biosynthesis; L-tryptophan biosynthesis; L-tryptophan from chorismate: step 2/5. Catalyzes the transfer of the phosphoribosyl group of 5-phosphorylribose-1-pyrophosphate (PRPP) to anthranilate to yield N-(5'-phosphoribosyl)-anthranilate (PRA). The sequence is that of Anthranilate phosphoribosyltransferase from Burkholderia ambifaria (strain ATCC BAA-244 / DSM 16087 / CCUG 44356 / LMG 19182 / AMMD) (Burkholderia cepacia (strain AMMD)).